The following is a 596-amino-acid chain: Arginine--tRNA ligase (596 aa).

The 'HIGH' region motif lies at 123–133 (PNTNKPLHLGH).

The protein belongs to the class-I aminoacyl-tRNA synthetase family. Monomer.

Its subcellular location is the cytoplasm. The catalysed reaction is tRNA(Arg) + L-arginine + ATP = L-arginyl-tRNA(Arg) + AMP + diphosphate. This chain is Arginine--tRNA ligase, found in Amoebophilus asiaticus (strain 5a2).